A 228-amino-acid polypeptide reads, in one-letter code: MKDVKALKLMTLNDVLSQINGDMTLGIGTGSTMELLLPQMAQLIKERGYNITGVCTSNKIAFLAKELGIKICEINDVDHIDLAIDGADEVDPSLNIIKGGGGALFREKVIDEMASRFVVVVDETKIVQYLGETFKLPVEVDKFNWYHILRKIESYADIKVERRVNEDVAFITDNGNYILDCKLPKGIDPYKFHEYLIHLTGVFETGYFLDMADQVIVGTQEGVKILEK.

Substrate-binding positions include 29 to 32 (TGST), 85 to 88 (DGAD), and 98 to 101 (KGGG). The active-site Proton acceptor is E107. K125 is a binding site for substrate.

Belongs to the ribose 5-phosphate isomerase family. Homodimer.

The enzyme catalyses aldehydo-D-ribose 5-phosphate = D-ribulose 5-phosphate. It participates in carbohydrate degradation; pentose phosphate pathway; D-ribose 5-phosphate from D-ribulose 5-phosphate (non-oxidative stage): step 1/1. In terms of biological role, catalyzes the reversible conversion of ribose-5-phosphate to ribulose 5-phosphate. The protein is Ribose-5-phosphate isomerase A of Staphylococcus aureus (strain Mu50 / ATCC 700699).